An 81-amino-acid polypeptide reads, in one-letter code: ATP synthase subunit c, chloroplastic (81 aa).

The next 2 membrane-spanning stretches (helical) occupy residues 3–23 (PIIS…ASIG) and 57–77 (LAFM…LLFA).

The protein belongs to the ATPase C chain family. As to quaternary structure, F-type ATPases have 2 components, F(1) - the catalytic core - and F(0) - the membrane proton channel. F(1) has five subunits: alpha(3), beta(3), gamma(1), delta(1), epsilon(1). F(0) has four main subunits: a(1), b(1), b'(1) and c(10-14). The alpha and beta chains form an alternating ring which encloses part of the gamma chain. F(1) is attached to F(0) by a central stalk formed by the gamma and epsilon chains, while a peripheral stalk is formed by the delta, b and b' chains.

Its subcellular location is the plastid. The protein localises to the chloroplast thylakoid membrane. F(1)F(0) ATP synthase produces ATP from ADP in the presence of a proton or sodium gradient. F-type ATPases consist of two structural domains, F(1) containing the extramembraneous catalytic core and F(0) containing the membrane proton channel, linked together by a central stalk and a peripheral stalk. During catalysis, ATP synthesis in the catalytic domain of F(1) is coupled via a rotary mechanism of the central stalk subunits to proton translocation. Functionally, key component of the F(0) channel; it plays a direct role in translocation across the membrane. A homomeric c-ring of between 10-14 subunits forms the central stalk rotor element with the F(1) delta and epsilon subunits. The sequence is that of ATP synthase subunit c, chloroplastic from Cicer arietinum (Chickpea).